We begin with the raw amino-acid sequence, 396 residues long: Pre-mRNA-splicing regulator WTAP (396 aa).

At methionine 1 the chain carries N-acetylmethionine. Position 14 is a phosphoserine (serine 14). Composition is skewed to low complexity over residues 240-257 (QQQQ…TTSS) and 278-291 (SNGS…SGSG). The tract at residues 240–396 (QQQQSQASAP…SSVNVQGAVL (157 aa)) is disordered. 4 positions are modified to phosphoserine: serine 297, serine 305, serine 306, and serine 341. The segment covering 305-316 (SSSGNGNKASNS) has biased composition (low complexity). Residues 340-351 (DSPTGSENSLTH) are compositionally biased toward polar residues. Threonine 350 carries the post-translational modification Phosphothreonine. Residues 352–368 (HSNDTDSSHDPQEEKAV) are compositionally biased toward basic and acidic residues. Residues 380 to 396 (HVQNGLDSSVNVQGAVL) are compositionally biased toward polar residues. Serine 388 bears the Phosphoserine mark.

It belongs to the fl(2)d family. In terms of assembly, component of the WMM complex, a N6-methyltransferase complex composed of a catalytic subcomplex, named MAC, and of an associated subcomplex, named MACOM. The MAC subcomplex is composed of METTL3 and METTL14. The MACOM subcomplex is composed of WTAP, ZC3H13, CBLL1/HAKAI, VIRMA, and, in some cases of RBM15 (RBM15 or RBM15B). Interacts with WT1. Also a component of a MACOM-like complex, named WTAP complex, composed of WTAP, ZC3H13, CBLL1, VIRMA, RBM15, BCLAF1 and THRAP3. Interacts with CPNE4 (via VWFA domain).

Its subcellular location is the nucleus speckle. The protein resides in the nucleus. The protein localises to the nucleoplasm. It is found in the cytoplasm. In terms of biological role, associated component of the WMM complex, a complex that mediates N6-methyladenosine (m6A) methylation of RNAs, a modification that plays a role in the efficiency of mRNA splicing and RNA processing. Acts as a key regulator of m6A methylation by promoting m6A methylation of mRNAs at the 3'-UTR. Required for accumulation of METTL3 and METTL14 to nuclear speckle. Acts as a mRNA splicing regulator. Regulates G2/M cell-cycle transition by binding to the 3' UTR of CCNA2, which enhances its stability. Impairs WT1 DNA-binding ability and inhibits expression of WT1 target genes. This is Pre-mRNA-splicing regulator WTAP from Mus musculus (Mouse).